We begin with the raw amino-acid sequence, 283 residues long: uncharacterized protein (283 aa).

Residues serine 208–lysine 232 show a composition bias toward basic and acidic residues. The segment at serine 208–lysine 237 is disordered.

This is an uncharacterized protein from Saccharomyces cerevisiae (strain ATCC 204508 / S288c) (Baker's yeast).